The chain runs to 153 residues: UPF0158 protein PA5073 (153 aa).

Belongs to the UPF0158 family.

The sequence is that of UPF0158 protein PA5073 from Pseudomonas aeruginosa (strain ATCC 15692 / DSM 22644 / CIP 104116 / JCM 14847 / LMG 12228 / 1C / PRS 101 / PAO1).